Consider the following 766-residue polypeptide: Slit homolog 2 protein (766 aa).

An N-terminal signal peptide occupies residues 1–30; that stretch reads MSGIGWQTLSLSLALVLSILNKVAPHACPA. In terms of domain architecture, LRRNT spans 31-55; the sequence is QCSCSGSTVDCHGLALRIVPRNIPR. 6 LRR repeats span residues 56-77, 80-101, 104-125, 128-149, 152-173, and 176-197; these read NTER…DFAG, HLRI…AFHD, ELER…LFLG, KLYR…AFRG, DIKN…AFRA, and DLEV…SFNH. A glycan (N-linked (GlcNAc...) asparagine) is linked at Asn-66. N-linked (GlcNAc...) asparagine glycosylation is present at Asn-186. Residues 209–259 enclose the LRRCT 1 domain; the sequence is NNLYCDCHLAWLSDWLRQRPRVGLYTQCMGPSHLRGHNVAEVQKREFVCSD. The LRRNT 2 domain occupies 268–304; the sequence is MAPSCSVLHCPIACTCSNNIVDCRGKGLTEIPTNLPE. Cys-281 and Cys-290 form a disulfide bridge. LRR repeat units lie at residues 305 to 326, 329 to 350, 353 to 374, 377 to 398, and 401 to 422; these read TITE…AFSP, KLRR…AFQG, SLNS…LFEG, SLQL…AFQD, and NLNL…TFSA. The region spanning 434 to 484 is the LRRCT 2 domain; it reads NPFICDCHLKWLADYLHTNPIETSGARCTSPRRLANKRIGQIKSKKFRCSG. 4 cysteine pairs are disulfide-bonded: Cys-438-Cys-461, Cys-440-Cys-482, Cys-502-Cys-508, and Cys-506-Cys-515. The 37-residue stretch at 493-529 folds into the LRRNT 3 domain; sequence SGDCFADLACPEKCRCEGTTVDCSNQKLNKIPDHIPQ. LRR repeat units follow at residues 530–551, 555–576, 579–600, 603–624, and 627–648; these read YTAE…GIFK, QLRK…AFEG, GVNE…MFKG, SLKT…SFTG, and SVRL…AFGT. Residue Asn-560 is glycosylated (N-linked (GlcNAc...) asparagine). Asn-619 carries N-linked (GlcNAc...) asparagine glycosylation. Residues 660–710 enclose the LRRCT 3 domain; it reads NPFNCNCHLAWLGEWLRRKRIVTGNPRCQKPYFLKEIPIQDVAIQDFTCDD. Disulfide bonds link Cys-664-Cys-687, Cys-666-Cys-708, Cys-723-Cys-729, and Cys-727-Cys-736. Residues 714-750 form the LRRNT 4 domain; it reads DNSCSPLSRCPSECTCLDTVVRCSNKGLKVLPKGIPR.

In terms of assembly, homodimer. Binds ROBO1 and ROBO2 with high affinity. Interacts with GREM1.

Its subcellular location is the secreted. In terms of biological role, thought to act as molecular guidance cue in cellular migration, and function appears to be mediated by interaction with roundabout homolog receptors. During neural development involved in axonal navigation at the ventral midline of the neural tube and projection of axons to different regions. SLIT1 and SLIT2 seem to be essential for midline guidance in the forebrain by acting as repulsive signal preventing inappropriate midline crossing by axons projecting from the olfactory bulb. In spinal cord development may play a role in guiding commissural axons once they reached the floor plate by modulating the response to netrin. In vitro, silences the attractive effect of NTN1 but not its growth-stimulatory effect and silencing requires the formation of a ROBO1-DCC complex. May be implicated in spinal cord midline post-crossing axon repulsion. In vitro, only commissural axons that crossed the midline responded to SLIT2. In the developing visual system appears to function as repellent for retinal ganglion axons by providing a repulsion that directs these axons along their appropriate paths prior to, and after passage through, the optic chiasm. In vitro, collapses and repels retinal ganglion cell growth cones. Seems to play a role in branching and arborization of CNS sensory axons, and in neuronal cell migration. Seems to be involved in regulating leukocyte migration. The polypeptide is Slit homolog 2 protein (Slit2) (Rattus norvegicus (Rat)).